The following is a 240-amino-acid chain: MEAENIRADAFEPAKRATKRGASGGGQQDVEMQVDEATGIEGQVLGSSRASAPPKAKRARSELRKVSVPPHRYSSLKEHWMKIFTPVVEHMKLQIRFNMKARQVELRVGPETPDIANLQRGADFVRAFLCGFEVDDALALLRLEDLFVESFEIKDVKTLRGDHQSRAIGRLAGKGGRTKFTIENVTKTRIVLADSKIHILGSYQNIQLARRAVCNLILGSPPSKVYGNLRAVASRLSERM.

Residues 1-15 (MEAENIRADAFEPAK) are compositionally biased toward basic and acidic residues. The interval 1 to 61 (MEAENIRADA…APPKAKRARS (61 aa)) is disordered. A KH domain is found at 164–213 (QSRAIGRLAGKGGRTKFTIENVTKTRIVLADSKIHILGSYQNIQLARRAV).

This sequence belongs to the PNO1 family.

It localises to the nucleus. It is found in the nucleolus. This chain is RNA-binding protein pno1 (l(1)G0004), found in Drosophila melanogaster (Fruit fly).